Reading from the N-terminus, the 867-residue chain is Probable potassium transporter 15 (867 aa).

Residues 1–13 are compositionally biased toward low complexity; sequence MAASSSSSASASA. Positions 1-88 are disordered; it reads MAASSSSSAS…EGEGEDGEKQ (88 aa). Residues 1–124 lie on the Cytoplasmic side of the membrane; sequence MAASSSSSAS…DSEEFDFGRT (124 aa). The segment covering 32-44 has biased composition (acidic residues); that stretch reads TEEDDEGEEDGDT. The segment covering 45–54 has biased composition (low complexity); sequence VEAAAAAVGA. Residues 63-84 show a composition bias toward acidic residues; that stretch reads SEEEEDEEDGGGGGEGEGEGED. A helical membrane pass occupies residues 125–145; the sequence is MFLALQTLAVVFGDIGISPLY. Residues 146–167 lie on the Extracellular side of the membrane; the sequence is TFDVMFSKYPILGEEDVLGALS. A helical membrane pass occupies residues 168-188; the sequence is LVLYTLISMPLVKYVLVVLWA. Residues 189 to 252 are Cytoplasmic-facing; sequence NDDGEGGIFA…KLESSLLLKK (64 aa). A helical membrane pass occupies residues 253-273; it reads LLLGLVLFGTAMFISNGVITP. The Extracellular segment spans residues 274-285; sequence AMSVLSAVSGLK. Residues 286-306 traverse the membrane as a helical segment; sequence VGIPNASQGLVVMISVVLLVI. Over 307–317 the chain is Cytoplasmic; the sequence is LYSVQRYATSK. A helical membrane pass occupies residues 318–338; sequence MGFALGPSLLIWFCCLGGIGI. Residues 339–365 are Extracellular-facing; it reads YNLSTYGPAAFKAFNPLYIIYYFGRNP. N-linked (GlcNAc...) asparagine glycosylation is present at Asn340. The helical transmembrane segment at 366–386 threads the bilayer; that stretch reads FQAWLSLAGCLLCATGSEAIF. Over 387–400 the chain is Cytoplasmic; sequence ANLSYFPVRYVQSM. Residues 401–421 traverse the membrane as a helical segment; sequence FALLVLPCLVLAYLGQGAFLI. At 422-433 the chain is on the extracellular side; sequence ANQNSSEQIFFS. Asn425 carries N-linked (GlcNAc...) asparagine glycosylation. Residues 434-454 traverse the membrane as a helical segment; the sequence is SIPSGVFWPVFLIANLAALIA. The Cytoplasmic segment spans residues 455–490; that stretch reads SRTMTTAIFQCLKQSIALGCFPRLKIIHTSRKFMAK. Residues 491 to 511 traverse the membrane as a helical segment; that stretch reads IYIPVVNWFLLFSCLGFILLF. Residues 512–522 lie on the Extracellular side of the membrane; sequence RSIYDVGNAYA. Residues 523-543 traverse the membrane as a helical segment; that stretch reads IAELGVMIMATVYVTIIMLLI. The Cytoplasmic segment spans residues 544 to 545; that stretch reads WE. The chain crosses the membrane as a helical span at residues 546 to 566; that stretch reads TSIVKVLSFVITFLSLELVFF. Topologically, residues 567-572 are extracellular; it reads SSSLSS. A helical membrane pass occupies residues 573-593; that stretch reads VGDGGWALIIFASGILMVMFI. The Cytoplasmic segment spans residues 594-867; it reads WNYGSKLKYD…VMQVRLTSYV (274 aa).

The protein belongs to the HAK/KUP transporter (TC 2.A.72.3) family.

It is found in the membrane. High-affinity potassium transporter. The polypeptide is Probable potassium transporter 15 (HAK15) (Oryza sativa subsp. japonica (Rice)).